The chain runs to 286 residues: F-box/SPRY domain-containing protein 1 (286 aa).

Residue Ala2 is modified to N-acetylalanine. Residues 33–82 (AGAGGRLPSRVLELVFSYLELSELRSCALVCKHWYRCLHGDENSEVWRSL) enclose the F-box domain. A B30.2/SPRY domain is found at 92–284 (LRTDILCNLP…VTLVYLGKPL (193 aa)).

The protein belongs to the FBXO45/Fsn family. In terms of assembly, forms a complex with MYCBP2 and SKP1. Interacts with HEY1; leading to FBXO45 nuclear translocation. Interacts (via SPRY domain) with CDH2.

Its subcellular location is the secreted. It is found in the postsynaptic cell membrane. The protein resides in the presynaptic cell membrane. The protein localises to the nucleus. The protein operates within protein modification; protein ubiquitination. Its function is as follows. Component of E3 ubiquitin ligase complex consisting of FBXO45, MYCBP2 and SKP1. Functions in substrate recognition but also plays an important role in assembly of the complex. Required for normal neuromuscular synaptogenesis, axon pathfinding and neuronal migration. Regulates neuron migration during brain development through interaction with N-cadherin/CDH2 after secretion via a non-classical mechanism. Plays a role in the regulation of neurotransmission at mature neurons. May control synaptic activity by controlling UNC13A via ubiquitin dependent pathway. Specifically recognizes TP73, promoting its ubiquitination and degradation. Polyubiquitinates NMNAT2, an adenylyltransferase that acts as an axon maintenance factor, and regulates its stability and degradation by the proteasome. Also acts by ubiquitinating FBXW7 during prolonged mitotic arrest and promotes FBXW7 proteasomal degradation. Induces subsequently an increase in mitotic slippage and prevents mitotic cell death. In response to influenza infection, mediates interferon-lambda receptor IFNLR1 polyubiquitination and degradation through the ubiquitin-proteasome system by docking with its intracellular receptor domain. In Homo sapiens (Human), this protein is F-box/SPRY domain-containing protein 1 (FBXO45).